A 194-amino-acid chain; its full sequence is MRESSQIRETTETKIKLSLQLDEGKNVSVQTGVGFFDHMLTLFARHGRFGLQVEAEGDVFVDAHHTVEDVGIVLGNCLKEALQNKEGINRYGSAYVPMDESLGFVAIDISGRSYIVFQGELTNPKLGDFDTELTEEFFRAVAHTANITLHARILYGSNTHHKIEALFKAFGRALREAVERNAHITGVNSTKGML.

The protein belongs to the imidazoleglycerol-phosphate dehydratase family.

The protein resides in the cytoplasm. It catalyses the reaction D-erythro-1-(imidazol-4-yl)glycerol 3-phosphate = 3-(imidazol-4-yl)-2-oxopropyl phosphate + H2O. It functions in the pathway amino-acid biosynthesis; L-histidine biosynthesis; L-histidine from 5-phospho-alpha-D-ribose 1-diphosphate: step 6/9. This Bacillus thuringiensis (strain Al Hakam) protein is Imidazoleglycerol-phosphate dehydratase.